Reading from the N-terminus, the 213-residue chain is ATP synthase peripheral stalk subunit OSCP, mitochondrial (213 aa).

The transit peptide at 1 to 23 (MASQAVSGLSRQVRCFSTSVVRP) directs the protein to the mitochondrion. The short motif at 5-23 (AVSGLSRQVRCFSTSVVRP) is the SIFI-degron element. 4 positions are modified to N6-acetyllysine: K54, K60, K70, and K73. K90 bears the N6-succinyllysine mark. Residues K100, K158, and K162 each carry the N6-acetyllysine; alternate modification. N6-succinyllysine; alternate occurs at positions 100, 158, and 162. An N6-acetyllysine mark is found at K172, K176, and K192. Position 199 is an N6-succinyllysine (K199).

This sequence belongs to the ATPase delta chain family. Component of the ATP synthase complex composed at least of ATP5F1A/subunit alpha, ATP5F1B/subunit beta, ATP5MC1/subunit c (homooctomer), MT-ATP6/subunit a, MT-ATP8/subunit 8, ATP5ME/subunit e, ATP5MF/subunit f, ATP5MG/subunit g, ATP5MK/subunit k, ATP5MJ/subunit j, ATP5F1C/subunit gamma, ATP5F1D/subunit delta, ATP5F1E/subunit epsilon, ATP5PF/subunit F6, ATP5PB/subunit b, ATP5PD/subunit d, ATP5PO/subunit OSCP. ATP synthase complex consists of a soluble F(1) head domain (subunits alpha(3) and beta(3)) - the catalytic core - and a membrane F(0) domain - the membrane proton channel (subunits c, a, 8, e, f, g, k and j). These two domains are linked by a central stalk (subunits gamma, delta, and epsilon) rotating inside the F1 region and a stationary peripheral stalk (subunits F6, b, d, and OSCP). Acetylation at Lys-162 decreases ATP production. Deacetylated by SIRT3. In terms of processing, in response to mitochondrial stress, the precursor protein is ubiquitinated by the SIFI complex in the cytoplasm before mitochondrial import, leading to its degradation. Within the SIFI complex, UBR4 initiates ubiquitin chain that are further elongated or branched by KCMF1.

It localises to the mitochondrion. The protein resides in the mitochondrion inner membrane. Functionally, subunit OSCP, of the mitochondrial membrane ATP synthase complex (F(1)F(0) ATP synthase or Complex V) that produces ATP from ADP in the presence of a proton gradient across the membrane which is generated by electron transport complexes of the respiratory chain. ATP synthase complex consist of a soluble F(1) head domain - the catalytic core - and a membrane F(1) domain - the membrane proton channel. These two domains are linked by a central stalk rotating inside the F(1) region and a stationary peripheral stalk. During catalysis, ATP synthesis in the catalytic domain of F(1) is coupled via a rotary mechanism of the central stalk subunits to proton translocation. In vivo, can only synthesize ATP although its ATP hydrolase activity can be activated artificially in vitro. Part of the complex F(0) domain. Part of the complex F(0) domain and the peripheric stalk, which acts as a stator to hold the catalytic alpha(3)beta(3) subcomplex and subunit a/ATP6 static relative to the rotary elements. This Sus scrofa (Pig) protein is ATP synthase peripheral stalk subunit OSCP, mitochondrial.